Here is a 1371-residue protein sequence, read N- to C-terminus: MAERANLVFHNKVIDGTAIKRLISRLIDHFGMAYTSHILDQVKTLGFQQATATSISLGIDDLLTIPSKGWLVQDAEQQSLILEKHHHYGNVHAVEKLRQSIEIWYATSEYLRQEMNLNFRMTDPFNPVHMMSFSGARGNASQVHQLVGMRGLMSDPQGQMIDLPIQSNLREGLSLTEYIISCYGARKGVVDTAVRTSDAGYLTRRLVEVVQHIVVRRTDCGTIRGISVSPRNKNRMMSERIFIQTLIGRVLADDIYIGSRCVAFRNQDLGIGLVNRFITFGTQSISIRTPFTCRSTSWICRLCYGRSPTHGDLVELGEAVGIIAGQSIGEPGTQLTLRTFHTGGVFTGGTAEHVRAPYNGKIKFNEDLVHPTRTRHGHPAFLCYIDLSVIIESEDIIHSVTIPPKSFLLVQNDQYVESEQVIAEIREGTYTFHFKERVRKYIYSDSEGEMHWSTDVSHAPEFTYSNVHLLPKTSHLWILSGSSCESSLIRFSIHKDQDQMNIPFFFVKSKAISSLSVNNDQVSQKFFSSDFSDKKKSGIPNYSELNEIVGTSHYNFIYSAIFHENSDLLAKRRRNRFLIPFQSIQEQEKEFIPHSGISIEIPINGIFRRNSIFAFFDDPRYRRKSCGILKYGTLKADSIIQKEDMIEYRGVQKFKTKYEMKVDRFFFIPEEVHILPESSAIMVQNYSIIGVDTRITLNIRSQVGGLIRVERKKKRIELKIFSGDIHFPDKTDKISRHSGILIPPGRGKTNSKEFKKLKNWIYVQRITPTKKKFFVLVRPVATYEIADSINLATLFPQDLFREKDNIQLRVFNYILYGNGKPTRGISDTSIQLVRTCLVLNWDQDNKNSSLEEVRSFFVEVSTKGLIRDFIRIGLVKSHISYIRKRQNPADSGLISADHMNPFYSISPKAGILQQSLRQNHGTIRMFLNRNKESQSLLILSSSNCFRIGPFNHVKYHNVINQSIKKNPIITIKNSSGPLGTAIQISNFYSFLPLLTYNQISVIKYLQLDNLKYIFQVINSYLIDENGRILNPDPYSNVVLNPFKLNWYFLHQNYHHNYCEETSTIISLGQFFCENVCIAKKEPHLKSGQVLIVERDSVVIRSAKPYLATPGAKVHGHYREILYEGDTLVTFIYEKSRSGDITQGLPKVEQVLEVRSIDSISLNLEKRIKGWNKCITRILGIPWGFLIGAELTIVQSRISLVNKIQKVYRSQGVQIHNRHIEIIVRQITSKVLVSEEGMSNVFLPGELIGLLQAERTGRALEEAICYRAILLGITRASLNTQSFISEASFQETARVLAKAALRGRIDWLKGLKENVVLGGVIPAGTGFNKGLVHCSRQHTNILLEKKTKNFSLFEGNMRDILFYHREFFDSSI.

The Zn(2+) site is built by Cys-220, Cys-293, Cys-300, and Cys-303.

It belongs to the RNA polymerase beta' chain family. RpoC2 subfamily. In plastids the minimal PEP RNA polymerase catalytic core is composed of four subunits: alpha, beta, beta', and beta''. When a (nuclear-encoded) sigma factor is associated with the core the holoenzyme is formed, which can initiate transcription. The cofactor is Zn(2+).

It is found in the plastid. The protein resides in the chloroplast. The catalysed reaction is RNA(n) + a ribonucleoside 5'-triphosphate = RNA(n+1) + diphosphate. Functionally, DNA-dependent RNA polymerase catalyzes the transcription of DNA into RNA using the four ribonucleoside triphosphates as substrates. The chain is DNA-directed RNA polymerase subunit beta'' from Lobularia maritima (Sweet alyssum).